Reading from the N-terminus, the 348-residue chain is Rhodopsin (348 aa).

N-acetylmethionine is present on Met-1. Residues 1-36 (MNGTEGPNFYVPFSNKTGVVRSPFEEPQYYLAEPWQ) lie on the Extracellular side of the membrane. Residues Asn-2 and Asn-15 are each glycosylated (N-linked (GlcNAc...) asparagine). Residues 37–61 (FSCLAAYMFMLIVLGFPINFLTLYV) traverse the membrane as a helical segment. Over 62–73 (TIQHKKLRTPLN) the chain is Cytoplasmic. Residues 74–96 (YILLNLAIADLFMVFGGFTTTLY) form a helical membrane-spanning segment. Residues 97 to 110 (TSLHGYFVFGPTGC) are Extracellular-facing. A disulfide bridge connects residues Cys-110 and Cys-187. Residues 111-133 (DLEGFFATLGGEIALWSLVVLAI) traverse the membrane as a helical segment. Residues 134–136 (ERY) carry the 'Ionic lock' involved in activated form stabilization motif. Residues 134–152 (ERYIVVCKPMSNFRFGENH) are Cytoplasmic-facing. The chain crosses the membrane as a helical span at residues 153-173 (AIMGVAFTWVMALACAAPPLV). Residues 174-202 (GWSRYIPEGMQCSCGIDYYTLKPEVNNES) lie on the Extracellular side of the membrane. Glu-201 is a Zn(2+) binding site. The helical transmembrane segment at 203 to 224 (FVIYMFVVHFTIPMVVIFFCYG) threads the bilayer. Residues 225-252 (QLVFTVKEAAAQQQESATTQKAEKEVTR) lie on the Cytoplasmic side of the membrane. Residues 253-274 (MVIIMVIAFLICWLPYAGVAFY) traverse the membrane as a helical segment. Topologically, residues 275–286 (IFTHQGSNFGPI) are extracellular. Zn(2+) is bound at residue Gln-279. The helical transmembrane segment at 287–308 (LMTLPAFFAKTSAVYNPVIYIM) threads the bilayer. Lys-296 carries the post-translational modification N6-(retinylidene)lysine. At 309-348 (LNKQFRTCMLTTLCCGKIPLGDDEASATASKTETSQVAPA) the chain is on the cytoplasmic side. 2 S-palmitoyl cysteine lipidation sites follow: Cys-322 and Cys-323. The interval 330–348 (DDEASATASKTETSQVAPA) is interaction with SAG. The residue at position 334 (Ser-334) is a Phosphoserine. Residue Thr-336 is modified to Phosphothreonine. A Phosphoserine modification is found at Ser-338. Phosphothreonine is present on residues Thr-340 and Thr-342. Ser-343 is modified (phosphoserine).

This sequence belongs to the G-protein coupled receptor 1 family. Opsin subfamily. In terms of assembly, homodimer. May form a complex composed of RHO, GRK1 and RCVRN in a Ca(2+)-dependent manner; RCVRN prevents the interaction between GRK1 and RHO. Interacts with GRK1. Interacts (phosphorylated form) with SAG. Interacts with GNAT1. Interacts with GNAT3. SAG and G-proteins compete for a common binding site. Interacts with PRCD; the interaction promotes PRCD stability. Forms a complex with ASAP1 and ARF4. Forms a complex with ASAP1, RAB11A, Rabin8/RAB3IP, ARF4 and RAB11FIP3; the complex regulates Golgi-to-cilia rhodopsin/RHO transport in photoreceptors. In terms of processing, phosphorylated on some or all of the serine and threonine residues present in the C-terminal region. Post-translationally, contains one covalently linked retinal chromophore. Upon light absorption, the covalently bound 11-cis-retinal is converted to all-trans-retinal. After hydrolysis of the Schiff base and release of the covalently bound all-trans-retinal, active rhodopsin is regenerated by binding of a fresh molecule of 11-cis-retinal.

It is found in the membrane. The protein resides in the cell projection. Its subcellular location is the cilium. The protein localises to the photoreceptor outer segment. Its function is as follows. Photoreceptor required for image-forming vision at low light intensity. Required for photoreceptor cell viability after birth. Light-induced isomerization of 11-cis to all-trans retinal triggers a conformational change that activates signaling via G-proteins. Subsequent receptor phosphorylation mediates displacement of the bound G-protein alpha subunit by the arrestin SAG and terminates signaling. This is Rhodopsin (RHO) from Caluromys philander (Bare-tailed woolly opossum).